A 191-amino-acid chain; its full sequence is Holliday junction branch migration complex subunit RuvA (191 aa).

Residues Met1 to Gly64 are domain I. Positions Ser65–Leu138 are domain II. Positions Leu138–Val141 are flexible linker. The segment at Pro142–Ala191 is domain III.

This sequence belongs to the RuvA family. In terms of assembly, homotetramer. Forms an RuvA(8)-RuvB(12)-Holliday junction (HJ) complex. HJ DNA is sandwiched between 2 RuvA tetramers; dsDNA enters through RuvA and exits via RuvB. An RuvB hexamer assembles on each DNA strand where it exits the tetramer. Each RuvB hexamer is contacted by two RuvA subunits (via domain III) on 2 adjacent RuvB subunits; this complex drives branch migration. In the full resolvosome a probable DNA-RuvA(4)-RuvB(12)-RuvC(2) complex forms which resolves the HJ.

It localises to the cytoplasm. The RuvA-RuvB-RuvC complex processes Holliday junction (HJ) DNA during genetic recombination and DNA repair, while the RuvA-RuvB complex plays an important role in the rescue of blocked DNA replication forks via replication fork reversal (RFR). RuvA specifically binds to HJ cruciform DNA, conferring on it an open structure. The RuvB hexamer acts as an ATP-dependent pump, pulling dsDNA into and through the RuvAB complex. HJ branch migration allows RuvC to scan DNA until it finds its consensus sequence, where it cleaves and resolves the cruciform DNA. In Thiobacillus denitrificans (strain ATCC 25259 / T1), this protein is Holliday junction branch migration complex subunit RuvA.